A 127-amino-acid polypeptide reads, in one-letter code: Small ribosomal subunit protein uS11 (127 aa).

Belongs to the universal ribosomal protein uS11 family. Part of the 30S ribosomal subunit. Interacts with proteins S7 and S18. Binds to IF-3.

Located on the platform of the 30S subunit, it bridges several disparate RNA helices of the 16S rRNA. Forms part of the Shine-Dalgarno cleft in the 70S ribosome. The chain is Small ribosomal subunit protein uS11 from Streptococcus pyogenes serotype M49 (strain NZ131).